The following is an 844-amino-acid chain: Probable inorganic carbon transporter subunit DabA 1 (844 aa).

The Zn(2+) site is built by cysteine 359, aspartate 361, histidine 543, and cysteine 558.

Belongs to the inorganic carbon transporter (TC 9.A.2) DabA family. As to quaternary structure, forms a complex with DabB. Zn(2+) serves as cofactor.

Its subcellular location is the cell inner membrane. In terms of biological role, part of an energy-coupled inorganic carbon pump. This Bradyrhizobium sp. (strain BTAi1 / ATCC BAA-1182) protein is Probable inorganic carbon transporter subunit DabA 1.